Reading from the N-terminus, the 281-residue chain is Pantothenate synthetase (281 aa).

30 to 37 is a binding site for ATP; it reads MGYLHEGH. The Proton donor role is filled by histidine 37. Glutamine 61 serves as a coordination point for (R)-pantoate. Glutamine 61 serves as a coordination point for beta-alanine. ATP is bound at residue 147-150; it reads GQKD. Glutamine 153 provides a ligand contact to (R)-pantoate. ATP-binding positions include valine 176 and 184–187; that span reads MSSR.

Belongs to the pantothenate synthetase family. Homodimer.

Its subcellular location is the cytoplasm. It carries out the reaction (R)-pantoate + beta-alanine + ATP = (R)-pantothenate + AMP + diphosphate + H(+). It functions in the pathway cofactor biosynthesis; (R)-pantothenate biosynthesis; (R)-pantothenate from (R)-pantoate and beta-alanine: step 1/1. Its function is as follows. Catalyzes the condensation of pantoate with beta-alanine in an ATP-dependent reaction via a pantoyl-adenylate intermediate. The chain is Pantothenate synthetase from Caldicellulosiruptor saccharolyticus (strain ATCC 43494 / DSM 8903 / Tp8T 6331).